The sequence spans 290 residues: UPF0761 membrane protein CKO_03126 (290 aa).

6 consecutive transmembrane segments (helical) span residues 44 to 64 (LLSLVPLIAVVFALFAAFPMF), 104 to 124 (VGACGLIVTALLLMYAIDSAL), 140 to 160 (FAVYWMILTLGPLLAGASLAI), 183 to 203 (VFPLILSWISFWLLYSIVPTT), 210 to 230 (AVVGAFVAAVLFEAGKKGFAL), and 244 to 264 (VLAVIPILFVWVYWTWCIVLL).

Belongs to the UPF0761 family.

It localises to the cell inner membrane. This Citrobacter koseri (strain ATCC BAA-895 / CDC 4225-83 / SGSC4696) protein is UPF0761 membrane protein CKO_03126.